The chain runs to 315 residues: Aspartate carbamoyltransferase catalytic subunit (315 aa).

R64 and T65 together coordinate carbamoyl phosphate. K92 contacts L-aspartate. The carbamoyl phosphate site is built by R114, H142, and Q145. Residues R175 and R229 each contribute to the L-aspartate site. Positions 270 and 271 each coordinate carbamoyl phosphate.

It belongs to the aspartate/ornithine carbamoyltransferase superfamily. ATCase family. In terms of assembly, heterododecamer (2C3:3R2) of six catalytic PyrB chains organized as two trimers (C3), and six regulatory PyrI chains organized as three dimers (R2).

The enzyme catalyses carbamoyl phosphate + L-aspartate = N-carbamoyl-L-aspartate + phosphate + H(+). It participates in pyrimidine metabolism; UMP biosynthesis via de novo pathway; (S)-dihydroorotate from bicarbonate: step 2/3. In terms of biological role, catalyzes the condensation of carbamoyl phosphate and aspartate to form carbamoyl aspartate and inorganic phosphate, the committed step in the de novo pyrimidine nucleotide biosynthesis pathway. The sequence is that of Aspartate carbamoyltransferase catalytic subunit from Xanthobacter autotrophicus (strain ATCC BAA-1158 / Py2).